The primary structure comprises 217 residues: Gas vesicle protein F2 (217 aa).

It belongs to the gas vesicle GvpF/GvpL family. In terms of assembly, binds GvpA.

The protein resides in the gas vesicle. It localises to the cytoplasm. Functionally, a minor component of the gas vesicle, may be involved in preventing GvpA aggregation during gas vesicle nucleation. Gas vesicles are hollow, gas filled proteinaceous nanostructures found in several microbial planktonic microorganisms. They allow positioning of halobacteria at the optimal depth for growth in the poorly aerated, shallow brine pools of their habitat. Its function is as follows. Expression of 2 c-vac DNA fragments containing 2 divergently transcribed regions (gvpE-gvpF-gvpG-gvpH-gvpI-gvpJ-gvpK-gvpL-gvpM and gvpA-gvpC-gvpN-gvpO) allows H.volcanii to produce gas vesicles. Note that gvpD is not necessary for gas vesicle formation. The sequence is that of Gas vesicle protein F2 from Halobacterium salinarum (strain ATCC 700922 / JCM 11081 / NRC-1) (Halobacterium halobium).